Here is a 299-residue protein sequence, read N- to C-terminus: tRNA dimethylallyltransferase (299 aa).

13-20 provides a ligand contact to ATP; sequence GATASGKT. 15–20 serves as a coordination point for substrate; the sequence is TASGKT. The tract at residues 38 to 41 is interaction with substrate tRNA; it reads DSRQ.

Belongs to the IPP transferase family. In terms of assembly, monomer. Mg(2+) is required as a cofactor.

The enzyme catalyses adenosine(37) in tRNA + dimethylallyl diphosphate = N(6)-dimethylallyladenosine(37) in tRNA + diphosphate. Its function is as follows. Catalyzes the transfer of a dimethylallyl group onto the adenine at position 37 in tRNAs that read codons beginning with uridine, leading to the formation of N6-(dimethylallyl)adenosine (i(6)A). The polypeptide is tRNA dimethylallyltransferase (Prochlorococcus marinus (strain MIT 9312)).